The primary structure comprises 98 residues: Aspartyl/glutamyl-tRNA(Asn/Gln) amidotransferase subunit C (98 aa).

This sequence belongs to the GatC family. Heterotrimer of A, B and C subunits.

It catalyses the reaction L-glutamyl-tRNA(Gln) + L-glutamine + ATP + H2O = L-glutaminyl-tRNA(Gln) + L-glutamate + ADP + phosphate + H(+). The catalysed reaction is L-aspartyl-tRNA(Asn) + L-glutamine + ATP + H2O = L-asparaginyl-tRNA(Asn) + L-glutamate + ADP + phosphate + 2 H(+). Functionally, allows the formation of correctly charged Asn-tRNA(Asn) or Gln-tRNA(Gln) through the transamidation of misacylated Asp-tRNA(Asn) or Glu-tRNA(Gln) in organisms which lack either or both of asparaginyl-tRNA or glutaminyl-tRNA synthetases. The reaction takes place in the presence of glutamine and ATP through an activated phospho-Asp-tRNA(Asn) or phospho-Glu-tRNA(Gln). The protein is Aspartyl/glutamyl-tRNA(Asn/Gln) amidotransferase subunit C of Gloeothece citriformis (strain PCC 7424) (Cyanothece sp. (strain PCC 7424)).